The primary structure comprises 398 residues: Elongation factor Tu (398 aa).

The region spanning 10 to 207 (KPHVNIGTIG…TVDEYIPEPE (198 aa)) is the tr-type G domain. Residues 19-26 (GHVDHGKT) form a G1 region. 19–26 (GHVDHGKT) contributes to the GTP binding site. Threonine 26 contributes to the Mg(2+) binding site. The G2 stretch occupies residues 63–67 (GITIN). The G3 stretch occupies residues 84-87 (DAPG). GTP is bound by residues 84–88 (DAPGH) and 139–142 (NKVD). The tract at residues 139–142 (NKVD) is G4. Residues 177–179 (SAL) are G5.

It belongs to the TRAFAC class translation factor GTPase superfamily. Classic translation factor GTPase family. EF-Tu/EF-1A subfamily. As to quaternary structure, monomer.

The protein localises to the cytoplasm. The enzyme catalyses GTP + H2O = GDP + phosphate + H(+). Its function is as follows. GTP hydrolase that promotes the GTP-dependent binding of aminoacyl-tRNA to the A-site of ribosomes during protein biosynthesis. This chain is Elongation factor Tu, found in Streptococcus pyogenes serotype M49 (strain NZ131).